The primary structure comprises 736 residues: Subtilisin-like protease SBT1.9 (736 aa).

Residues 1–20 form the signal peptide; it reads MGMTVVIILVFSFFVAIVTA. A propeptide spans 21 to 101 (activation peptide); it reads ETSPYIIHMD…FTKDLPVKLH (81 aa). The Inhibitor I9 domain occupies 25–101; it reads YIIHMDLSAK…FTKDLPVKLH (77 aa). The region spanning 103 to 582 is the Peptidase S8 domain; the sequence is TFSPKFIGLN…AGHVSTNKVL (480 aa). N-linked (GlcNAc...) asparagine glycosylation is present at Asn112. Asp133 serves as the catalytic Charge relay system. An N-linked (GlcNAc...) asparagine glycan is attached at Asn162. Catalysis depends on His205, which acts as the Charge relay system. N-linked (GlcNAc...) asparagine glycosylation is found at Asn220, Asn381, and Asn453. A PA domain is found at 367-441; that stretch reads VQFPVTYIES…VAFIGSKHRE (75 aa). Catalysis depends on Ser529, which acts as the Charge relay system. Residue Asn617 is glycosylated (N-linked (GlcNAc...) asparagine).

The protein belongs to the peptidase S8 family.

The protein localises to the secreted. The polypeptide is Subtilisin-like protease SBT1.9 (Arabidopsis thaliana (Mouse-ear cress)).